The sequence spans 334 residues: Ornithine carbamoyltransferase (334 aa).

Residues 57 to 60, Gln-84, Arg-108, and 135 to 138 contribute to the carbamoyl phosphate site; these read STRT and HPTQ. L-ornithine-binding positions include Asn-169, Asp-233, and 237–238; that span reads SM. Carbamoyl phosphate-binding positions include 275-276 and Arg-320; that span reads CL.

This sequence belongs to the aspartate/ornithine carbamoyltransferase superfamily. OTCase family.

It is found in the cytoplasm. It carries out the reaction carbamoyl phosphate + L-ornithine = L-citrulline + phosphate + H(+). It participates in amino-acid biosynthesis; L-arginine biosynthesis; L-arginine from L-ornithine and carbamoyl phosphate: step 1/3. Reversibly catalyzes the transfer of the carbamoyl group from carbamoyl phosphate (CP) to the N(epsilon) atom of ornithine (ORN) to produce L-citrulline. The sequence is that of Ornithine carbamoyltransferase (argF) from Pasteurella multocida (strain Pm70).